Here is a 503-residue protein sequence, read N- to C-terminus: Probable cytosol aminopeptidase (503 aa).

Mn(2+) contacts are provided by lysine 270 and aspartate 275. Lysine 282 is a catalytic residue. Mn(2+) is bound by residues aspartate 293, aspartate 352, and glutamate 354. Residue arginine 356 is part of the active site.

Belongs to the peptidase M17 family. Mn(2+) serves as cofactor.

It is found in the cytoplasm. The catalysed reaction is Release of an N-terminal amino acid, Xaa-|-Yaa-, in which Xaa is preferably Leu, but may be other amino acids including Pro although not Arg or Lys, and Yaa may be Pro. Amino acid amides and methyl esters are also readily hydrolyzed, but rates on arylamides are exceedingly low.. It carries out the reaction Release of an N-terminal amino acid, preferentially leucine, but not glutamic or aspartic acids.. Its function is as follows. Presumably involved in the processing and regular turnover of intracellular proteins. Catalyzes the removal of unsubstituted N-terminal amino acids from various peptides. In Escherichia coli O139:H28 (strain E24377A / ETEC), this protein is Probable cytosol aminopeptidase.